A 230-amino-acid polypeptide reads, in one-letter code: Cell division ATP-binding protein FtsE (230 aa).

The ABC transporter domain maps to 4–229; the sequence is IEMRDVVKKY…DESKGEYGYD (226 aa). 37–44 provides a ligand contact to ATP; the sequence is GPSGAGKS.

The protein belongs to the ABC transporter superfamily. In terms of assembly, homodimer. Interacts with FtsX; forms a membrane-associated complex. Interacts with pcsB.

It localises to the cell membrane. It catalyses the reaction ATP + H2O = ADP + phosphate + H(+). Part of the ABC transporter FtsEX involved in cellular division. Has ATPase activity. Essential for cell division and viability. The sequence is that of Cell division ATP-binding protein FtsE from Streptococcus pneumoniae serotype 2 (strain D39 / NCTC 7466).